The sequence spans 617 residues: Na(+)/H(+) antiporter NhaA 1 (617 aa).

Residues 1 to 433 (MTVTEQTTAR…GWAIFRITDW (433 aa)) are na(+)/H(+) antiporter NhaA. 11 consecutive transmembrane segments (helical) span residues 33 to 53 (AAAL…SPWA), 75 to 95 (MTVK…IVGL), 113 to 133 (AVPV…FLAF), 141 to 161 (HAWG…LAII), 171 to 191 (LFLL…IAVF), 194 to 214 (DAIQ…LALV), 234 to 254 (VALY…ALLI), 304 to 324 (VGPA…AGVL), 340 to 360 (WGVV…ATWL), 378 to 398 (IAGG…IVDI), and 411 to 431 (IGVL…FRIT). The region spanning 434–617 (LSPPEPVGLK…LIRALEAGRR (184 aa)) is the Thioredoxin domain.

In the N-terminal section; belongs to the NhaA Na(+)/H(+) (TC 2.A.33) antiporter family.

The protein resides in the cell membrane. It carries out the reaction Na(+)(in) + 2 H(+)(out) = Na(+)(out) + 2 H(+)(in). Na(+)/H(+) antiporter that extrudes sodium in exchange for external protons. In Mycolicibacterium vanbaalenii (strain DSM 7251 / JCM 13017 / BCRC 16820 / KCTC 9966 / NRRL B-24157 / PYR-1) (Mycobacterium vanbaalenii), this protein is Na(+)/H(+) antiporter NhaA 1.